The chain runs to 174 residues: Small ribosomal subunit protein uS12m (174 aa).

The protein belongs to the universal ribosomal protein uS12 family. In terms of assembly, component of the mitochondrial small ribosomal subunit (mt-SSU). Mature N.crassa 74S mitochondrial ribosomes consist of a small (37S) and a large (54S) subunit. The 37S small subunit contains a 16S ribosomal RNA (16S mt-rRNA) and 32 different proteins. The 54S large subunit contains a 23S rRNA (23S mt-rRNA) and 42 different proteins. uS12m forms part of the decoding center of the mt-SSU.

The protein localises to the mitochondrion. Component of the mitochondrial ribosome (mitoribosome), a dedicated translation machinery responsible for the synthesis of mitochondrial genome-encoded proteins, including at least some of the essential transmembrane subunits of the mitochondrial respiratory chain. The mitoribosomes are attached to the mitochondrial inner membrane and translation products are cotranslationally integrated into the membrane. The protein is Small ribosomal subunit protein uS12m (mrps12) of Neurospora crassa (strain ATCC 24698 / 74-OR23-1A / CBS 708.71 / DSM 1257 / FGSC 987).